Reading from the N-terminus, the 600-residue chain is Chaperone protein DnaK (600 aa).

Phosphothreonine; by autocatalysis is present on T175. The span at 569 to 578 shows a compositional bias: low complexity; that stretch reads SFAQATAQQA. The disordered stretch occupies residues 569-600; that stretch reads SFAQATAQQANTSESDPKADDSNTIDAEIKQD. A compositionally biased stretch (basic and acidic residues) spans 583–600; that stretch reads SDPKADDSNTIDAEIKQD.

Belongs to the heat shock protein 70 family.

In terms of biological role, acts as a chaperone. This Mesomycoplasma hyopneumoniae (strain J / ATCC 25934 / NCTC 10110) (Mycoplasma hyopneumoniae) protein is Chaperone protein DnaK.